Here is a 412-residue protein sequence, read N- to C-terminus: Zinc finger protein 821 (412 aa).

The disordered stretch occupies residues 26–83 (RQAMMKTDFPGDLGSQRQAIQQLRDQDSSSSDSEGDEEETTQDEVSSHTSEEDGGVVK). Over residues 58–67 (SEGDEEETTQ) the composition is skewed to acidic residues. C2H2-type zinc fingers lie at residues 116–140 (GLCQCPLCQLDCGSREQLIAHVYQH) and 150–172 (YMCPVCGRALSSPGSLGRHLLIH). A coiled-coil region spans residues 257 to 366 (KWALRRQNEP…EKMDMMLRAQ (110 aa)). A disordered region spans residues 278 to 319 (RTAKKSRRDNETPEEREVRRMRDREAKRLQRMQETDEQRARR).

Belongs to the krueppel C2H2-type zinc-finger protein family.

The protein localises to the nucleus. Its function is as follows. May be involved in transcriptional regulation. The protein is Zinc finger protein 821 (ZNF821) of Bos taurus (Bovine).